A 442-amino-acid chain; its full sequence is Alpha-1,6-mannosyl-glycoprotein 2-beta-N-acetylglucosaminyltransferase (442 aa).

Residues 1–9 are Cytoplasmic-facing; sequence MRFRIYKRK. The helical; Signal-anchor for type II membrane protein transmembrane segment at 10-29 threads the bilayer; that stretch reads VLILTLVVAACGFVLWSSNG. The Lumenal portion of the chain corresponds to 30-442; sequence RQRKSDALGP…ELCKSYRRLQ (413 aa). N-linked (GlcNAc...) asparagine glycans are attached at residues asparagine 64 and asparagine 81. Residues 118 to 122 and aspartate 149 contribute to the substrate site; that span reads QVHNR. Cysteine 191 and cysteine 205 are joined by a disulfide. 224 to 228 provides a ligand contact to substrate; sequence QTKHH. Aspartate 256 lines the Mn(2+) pocket. A disulfide bond links cysteine 278 and cysteine 281. Arginine 293 is a binding site for substrate. Cystine bridges form between cysteine 329/cysteine 352, cysteine 334/cysteine 435, and cysteine 373/cysteine 381. Mn(2+) is bound at residue histidine 369.

Belongs to the glycosyltransferase 16 (GT16) protein family. As to quaternary structure, homodimer. Requires Mn(2+) as cofactor. In terms of tissue distribution, detected in liver, lung, testis, kidney, brain, spleen, thymus, uterus and intestine.

Its subcellular location is the golgi apparatus membrane. The catalysed reaction is an N(4)-{beta-D-GlcNAc-(1-&gt;2)-alpha-D-Man-(1-&gt;3)-[alpha-D-Man-(1-&gt;6)]-beta-D-Man-(1-&gt;4)-beta-D-GlcNAc-(1-&gt;4)-beta-D-GlcNAc}-L-asparaginyl-[protein] + UDP-N-acetyl-alpha-D-glucosamine = N(4)-{beta-D-GlcNAc-(1-&gt;2)-alpha-D-Man-(1-&gt;3)-[beta-D-GlcNAc-(1-&gt;2)-alpha-D-Man-(1-&gt;6)]-beta-D-Man-(1-&gt;4)-beta-D-GlcNAc-(1-&gt;4)-beta-D-GlcNAc}-L-asparaginyl-[protein] + UDP + H(+). It functions in the pathway protein modification; protein glycosylation. Plays an essential role in protein N-glycosylation. Catalyzes the transfer of N-acetylglucosamine (GlcNAc) onto the free terminal mannose moiety in the core structure of the nascent N-linked glycan chain, giving rise to the second branch in complex glycans. This is Alpha-1,6-mannosyl-glycoprotein 2-beta-N-acetylglucosaminyltransferase (Mgat2) from Mus musculus (Mouse).